A 71-amino-acid polypeptide reads, in one-letter code: uncharacterized protein (71 aa).

Residues 1–16 (MLLLYTVMILTCIIYK) lie on the Cytoplasmic side of the membrane. The chain crosses the membrane as a helical span at residues 17–38 (LVPDNKYWPIHMFFFIMIYIVY). Residues 39 to 69 (MYEKLDIHEKSQFWNYTMARLSGHPVPTIIC) lie on the Extracellular side of the membrane. N53 carries N-linked (GlcNAc...) asparagine; by host glycosylation.

It belongs to the asfivirus X69R family.

It localises to the host membrane. This is an uncharacterized protein from African swine fever virus (isolate Pig/Kenya/KEN-50/1950) (ASFV).